A 362-amino-acid polypeptide reads, in one-letter code: Peptide chain release factor 1 (362 aa).

Position 237 is an N5-methylglutamine (Gln-237).

It belongs to the prokaryotic/mitochondrial release factor family. Methylated by PrmC. Methylation increases the termination efficiency of RF1.

The protein localises to the cytoplasm. In terms of biological role, peptide chain release factor 1 directs the termination of translation in response to the peptide chain termination codons UAG and UAA. The chain is Peptide chain release factor 1 from Legionella pneumophila (strain Corby).